The sequence spans 169 residues: Putative hydrogenase maturation protease MJ0631 (169 aa).

The protein belongs to the peptidase A31 family.

The chain is Putative hydrogenase maturation protease MJ0631 from Methanocaldococcus jannaschii (strain ATCC 43067 / DSM 2661 / JAL-1 / JCM 10045 / NBRC 100440) (Methanococcus jannaschii).